Reading from the N-terminus, the 330-residue chain is tRNA uridine(34) hydroxylase (330 aa).

The region spanning 123 to 217 is the Rhodanese domain; that stretch reads SDPETILVDT…YLEEVPKEES (95 aa). Catalysis depends on cysteine 177, which acts as the Cysteine persulfide intermediate. A disordered region spans residues 310 to 330; sequence LNKQQKQQAKEIARKKAKSEI. Residues 317–330 show a composition bias toward basic and acidic residues; that stretch reads QAKEIARKKAKSEI.

This sequence belongs to the TrhO family.

The catalysed reaction is uridine(34) in tRNA + AH2 + O2 = 5-hydroxyuridine(34) in tRNA + A + H2O. Catalyzes oxygen-dependent 5-hydroxyuridine (ho5U) modification at position 34 in tRNAs. This is tRNA uridine(34) hydroxylase from Francisella philomiragia subsp. philomiragia (strain ATCC 25017 / CCUG 19701 / FSC 153 / O#319-036).